The following is a 184-amino-acid chain: Signal peptidase I S (184 aa).

Residues 1-18 are Cytoplasmic-facing; the sequence is MKSENVSKKKSILEWAKA. Residues 19–39 form a helical membrane-spanning segment; the sequence is IVIAVVLALLIRNFIFAPYVV. The Extracellular segment spans residues 40–184; it reads DGDSMYPTLH…YPFNEMRKTN (145 aa). Catalysis depends on residues serine 43 and lysine 83.

This sequence belongs to the peptidase S26 family.

Its subcellular location is the cell membrane. The catalysed reaction is Cleavage of hydrophobic, N-terminal signal or leader sequences from secreted and periplasmic proteins.. Its function is as follows. Not essential for cell viability, but required for efficient secretion of many proteins. The protein is Signal peptidase I S (sipS) of Bacillus subtilis (strain 168).